A 215-amino-acid polypeptide reads, in one-letter code: MKQNRKNLPIILASSSPARIELLNRIKIIPSQIIPADIDETPNLRELPAPLAIRLAYEKAIKIASQIEESAIIIAANTVAAVGRRILPKATTYEEVKNCIKMLSGRRHRIYTGLCIIKKENDQLTVRQKIVQTIVKFKKLSDEEINFYCSLDEGIDKAGGCKISGYAEAFISFISGSYSNVMGLPLFETVNALTSLGFRCSSIMPAKMNYCHSAT.

Belongs to the Maf family. The cofactor is a divalent metal cation.

It is found in the cytoplasm. It carries out the reaction a ribonucleoside 5'-triphosphate + H2O = a ribonucleoside 5'-phosphate + diphosphate + H(+). The catalysed reaction is a 2'-deoxyribonucleoside 5'-triphosphate + H2O = a 2'-deoxyribonucleoside 5'-phosphate + diphosphate + H(+). Functionally, nucleoside triphosphate pyrophosphatase. May have a dual role in cell division arrest and in preventing the incorporation of modified nucleotides into cellular nucleic acids. The sequence is that of Nucleoside triphosphate pyrophosphatase from Rickettsia conorii (strain ATCC VR-613 / Malish 7).